The sequence spans 2286 residues: Non-reducing polyketide synthase fsr1 (2286 aa).

Residues 7-342 (LYLFGDQTFD…IYTALKKTSL (336 aa)) are N-terminal acylcarrier protein transacylase domain (SAT). The region spanning 368–805 (KPKLAIVAMS…GGNSALLIQD (438 aa)) is the Ketosynthase family 3 (KS3) domain. Catalysis depends on for beta-ketoacyl synthase activity residues Cys540, His675, and His722. Positions 905–1195 (VFTFTGQGAQ…GMVKPTLGQQ (291 aa)) are acyl/malonyl transferases. The active-site For acyl/malonyl transferase activity is the Ser996. Residues 1285–1417 (HSVVEESGDS…CVVLFKDRSH (133 aa)) form an N-terminal hotdog fold region. The 307-residue stretch at 1285 to 1591 (HSVVEESGDS…IQGVPRRVLK (307 aa)) folds into the PKS/mFAS DH domain. The interval 1296–1588 (KTGIVVEADI…QIAIQGVPRR (293 aa)) is product template (PT) domainn. The Proton acceptor; for dehydratase activity role is filled by His1317. The interval 1444 to 1591 (SARFNRPMAY…IQGVPRRVLK (148 aa)) is C-terminal hotdog fold. The active-site Proton donor; for dehydratase activity is the Asp1504. Positions 1600-1639 (KKGQPQRQTQDKPRNTPSQTKDSTPKPAQNKPAAKVEPPK) are disordered. A Carrier 1 domain is found at 1637–1712 (PPKFSTAIRI…DLRAFLGADE (76 aa)). At Ser1671 the chain carries O-(pantetheine 4'-phosphoryl)serine. Positions 1716 to 1735 (ESSSSAASDSGRDTTTTGSA) are disordered. The region spanning 1748-1823 (EVEFERALEI…DLKTMLAREM (76 aa)) is the Carrier 2 domain. The residue at position 1782 (Ser1782) is an O-(pantetheine 4'-phosphoryl)serine. Residues 1897–2145 (VTGASGGLGS…NWTPVNDIAD (249 aa)) form a reductase (R) domain region.

Its pathway is polyketide biosynthesis. Non-reducing polyketide synthase; part of the gene cluster that mediates the biosynthesis of fusarubins, highly pigmented naphthoquinones responsible for the coloration of the fruiting bodies. The non-reducing polyketide synthase FSR1 is responsible for the condensation of seven acetyl-CoA units to yield a haptaketide. After rings A and B are formed by aldol-type cyclization, the PKS-derived product is released as 6-O-demethylfusarubinaldehyde. Then, two hydroxyl groups at C-5 and C-10 are incorporated by FSR3, and simultaneously hydroxyl groups at C-6 and C-8 are methylated by FSR2. The aldehyde is, on the one hand, reduced by FSR3 to 8-O-methylfusarubin alcohol, which equilibrates mainly with 8-O-methylfusarubin and only small amounts of 8-O-methylnectriafurone. On the other hand, the aldehyde can be oxidized to form 8-O-methylfusarubinic acid, a reaction driven by FSR3 equilibrating with 8-O-methylfusarubinlactone, finally resulting in 8-O-methylanhydrofusarubinlactol after a further reduction step and loss of water. 8-O-Methylfusarubinic acid can also undergo decarboxylation, resulting in 8-O-methyl-13-hydroxynorjavanicin after another hydroxylation step at C-13. Both steps are most likely also accomplished by FSR3. No enzymatic function has been determined so far for either FSR4 and FSR5. Their deletion does not alter the product spectrum, but the possibility that they catalyze specific enzymatic steps during perithecium development cannot be ruled out. FSR4 might possess a regulatory function in the biosynthesis of fusarubins. This Gibberella fujikuroi (strain CBS 195.34 / IMI 58289 / NRRL A-6831) (Bakanae and foot rot disease fungus) protein is Non-reducing polyketide synthase fsr1.